Reading from the N-terminus, the 360-residue chain is Peptide chain release factor 1 (360 aa).

Glutamine 235 is modified (N5-methylglutamine).

It belongs to the prokaryotic/mitochondrial release factor family. Post-translationally, methylated by PrmC. Methylation increases the termination efficiency of RF1.

It localises to the cytoplasm. Its function is as follows. Peptide chain release factor 1 directs the termination of translation in response to the peptide chain termination codons UAG and UAA. This chain is Peptide chain release factor 1, found in Dechloromonas aromatica (strain RCB).